Reading from the N-terminus, the 801-residue chain is Phenylalanine--tRNA ligase beta subunit (801 aa).

The 115-residue stretch at 39-153 (AEGLSKLVVG…DEAVPGDAIF (115 aa)) folds into the tRNA-binding domain. The B5 domain maps to 406 to 481 (TEPVEVSTNL…RIYGYDKLPT (76 aa)). Mg(2+) contacts are provided by Asp459, Asp465, Glu468, and Glu469. The 94-residue stretch at 708-801 (TKFPAMTRDI…LTEQVGAEVR (94 aa)) folds into the FDX-ACB domain.

It belongs to the phenylalanyl-tRNA synthetase beta subunit family. Type 1 subfamily. As to quaternary structure, tetramer of two alpha and two beta subunits. Mg(2+) is required as a cofactor.

Its subcellular location is the cytoplasm. The enzyme catalyses tRNA(Phe) + L-phenylalanine + ATP = L-phenylalanyl-tRNA(Phe) + AMP + diphosphate + H(+). In Streptococcus pyogenes serotype M3 (strain SSI-1), this protein is Phenylalanine--tRNA ligase beta subunit.